We begin with the raw amino-acid sequence, 275 residues long: NH(3)-dependent NAD(+) synthetase (275 aa).

An ATP-binding site is contributed by 50–57 (GISGGVDS). Residue aspartate 56 coordinates Mg(2+). Residue arginine 147 participates in deamido-NAD(+) binding. Threonine 167 provides a ligand contact to ATP. Glutamate 172 is a Mg(2+) binding site. Deamido-NAD(+)-binding residues include lysine 180 and aspartate 187. Residues lysine 196 and threonine 218 each contribute to the ATP site. A deamido-NAD(+)-binding site is contributed by 267 to 268 (HK).

It belongs to the NAD synthetase family. In terms of assembly, homodimer.

It catalyses the reaction deamido-NAD(+) + NH4(+) + ATP = AMP + diphosphate + NAD(+) + H(+). It participates in cofactor biosynthesis; NAD(+) biosynthesis; NAD(+) from deamido-NAD(+) (ammonia route): step 1/1. Functionally, catalyzes the ATP-dependent amidation of deamido-NAD to form NAD. Uses ammonia as a nitrogen source. This Pseudomonas entomophila (strain L48) protein is NH(3)-dependent NAD(+) synthetase.